The sequence spans 264 residues: Thymidylate synthase (264 aa).

Arg-21 lines the dUMP pocket. Residue His-51 participates in (6R)-5,10-methylene-5,6,7,8-tetrahydrofolate binding. Residue 126 to 127 participates in dUMP binding; sequence RR. Residue Cys-146 is the Nucleophile of the active site. Residues 166-169, Asn-177, and 207-209 each bind dUMP; these read RSAD and HLY. Asp-169 is a binding site for (6R)-5,10-methylene-5,6,7,8-tetrahydrofolate. Residue Ala-263 coordinates (6R)-5,10-methylene-5,6,7,8-tetrahydrofolate.

The protein belongs to the thymidylate synthase family. Bacterial-type ThyA subfamily. Homodimer.

The protein localises to the cytoplasm. The catalysed reaction is dUMP + (6R)-5,10-methylene-5,6,7,8-tetrahydrofolate = 7,8-dihydrofolate + dTMP. The protein operates within pyrimidine metabolism; dTTP biosynthesis. Functionally, catalyzes the reductive methylation of 2'-deoxyuridine-5'-monophosphate (dUMP) to 2'-deoxythymidine-5'-monophosphate (dTMP) while utilizing 5,10-methylenetetrahydrofolate (mTHF) as the methyl donor and reductant in the reaction, yielding dihydrofolate (DHF) as a by-product. This enzymatic reaction provides an intracellular de novo source of dTMP, an essential precursor for DNA biosynthesis. This is Thymidylate synthase from Mesorhizobium japonicum (strain LMG 29417 / CECT 9101 / MAFF 303099) (Mesorhizobium loti (strain MAFF 303099)).